We begin with the raw amino-acid sequence, 215 residues long: N-(5'-phosphoribosyl)anthranilate isomerase (215 aa).

Belongs to the TrpF family.

It catalyses the reaction N-(5-phospho-beta-D-ribosyl)anthranilate = 1-(2-carboxyphenylamino)-1-deoxy-D-ribulose 5-phosphate. It functions in the pathway amino-acid biosynthesis; L-tryptophan biosynthesis; L-tryptophan from chorismate: step 3/5. In Sinorhizobium medicae (strain WSM419) (Ensifer medicae), this protein is N-(5'-phosphoribosyl)anthranilate isomerase.